The chain runs to 124 residues: Small ribosomal subunit protein uS12cz/uS12cy (124 aa).

This sequence belongs to the universal ribosomal protein uS12 family. Part of the 30S ribosomal subunit.

The protein localises to the plastid. In terms of biological role, with S4 and S5 plays an important role in translational accuracy. Located at the interface of the 30S and 50S subunits. The protein is Small ribosomal subunit protein uS12cz/uS12cy (rps12-A) of Epifagus virginiana (Beechdrops).